A 252-amino-acid polypeptide reads, in one-letter code: MTFLEEILAQKAVEVADMPLEKVAEKRKTYSFYEFLKANTNTMQLIAEVKRASPSKGEINMGVNPVLQAKSYQAAGAGMISVLTDPVFFKGSIEDLREVAKNVEIPVLCKDFIISEKQLIRARNAGATVVLLIISALTEEMLITLFEQALALDLEVLVEVHDQKELAVAQKIGAKLIGVNNRNLHTFEVDIAVSERLASDFSSDACFISESGFRTAEDVARVSQKYNAVLVGEALMREATPEAAAKSLKVTR.

Belongs to the TrpC family.

It catalyses the reaction 1-(2-carboxyphenylamino)-1-deoxy-D-ribulose 5-phosphate + H(+) = (1S,2R)-1-C-(indol-3-yl)glycerol 3-phosphate + CO2 + H2O. It participates in amino-acid biosynthesis; L-tryptophan biosynthesis; L-tryptophan from chorismate: step 4/5. This Listeria monocytogenes serotype 4a (strain HCC23) protein is Indole-3-glycerol phosphate synthase.